We begin with the raw amino-acid sequence, 553 residues long: MSLSGASERSVPATKIEITVSCRNLLDLDTFSKSDPMVVLHTQSRASQEWREFGRTEVIDNTLNPDFVRKFVLDYFFEEKQNLRFDVYNVDSKANISKPKDFLGQAFLALGEVIGGQGSRVERPLTGVPGKKCGTILLTAEELSNCRDIATMQLCANKLDKKDFFGKSDPFLVFYRSNEDGTFTICHKTEVVKNTLNPVWQPFSIPVRALCNGDYDRTVKIDVYDWDRDGSHDFIGEFTTSYRELSKAQNQFTVYEVLNPRKKCKKKKYTNSGTVTLLSFSVDSEFTFVDYIKGGTQLNFTVAIDFTASNGNPLQPTSLHYMSPYQLSAYAMALKAVGEIIQDYDSDKLFPAYGFGAKLPPEGRISHQFPLNNNDEDPNCAGIEGVLESYFQSLRTVQLYGPTYFAPVINQVARAAAKISDGSQYYVLLIITDGVISDMTQTKEAIVSASSLPMSIIIVGVGPAMFEAMEELDGDDVRVSSRGRYAERDIVQFVPFRDYVDRSGNQVLSMARLAKDVLAEIPEQLLSYMRTRDIQPRPPPPVSPNPTPAPEQP.

C2 domains lie at 1 to 125 (MSLS…ERPL) and 132 to 255 (KCGT…FTVY). Ca(2+)-binding residues include Asp-163, Asp-169, Asp-225, Asp-227, and Asp-233. The VWFA domain occupies 299-500 (NFTVAIDFTA…VQFVPFRDYV (202 aa)). The disordered stretch occupies residues 531 to 553 (TRDIQPRPPPPVSPNPTPAPEQP). The segment covering 536–553 (PRPPPPVSPNPTPAPEQP) has biased composition (pro residues).

The protein belongs to the copine family. Ca(2+) serves as cofactor.

Functionally, probable calcium-dependent phospholipid-binding protein that may play a role in calcium-mediated intracellular processes. Plays a role in dendrite formation by melanocytes. The chain is Copine-9 from Mus musculus (Mouse).